The following is a 1587-amino-acid chain: Sister chromatid cohesion protein mis4 (1587 aa).

Positions 140–172 (PKEKPDASSINTNRSSSDNGFLTPSSSPRSPSC) are disordered. Residues 147-162 (SSINTNRSSSDNGFLT) are compositionally biased toward polar residues. Low complexity predominate over residues 163–172 (PSSSPRSPSC). Ser-183 carries the post-translational modification Phosphoserine. HEAT repeat units lie at residues 775–812 (LNLK…IPSI), 814–851 (RTHP…AYRE), 853–888 (IPQI…ATED), 890–927 (NIRV…SPAS), 1101–1140 (ATLM…ARHS), and 1183–1220 (DAYV…RETS).

This sequence belongs to the SCC2/Nipped-B family. Interacts with ssl3.

Its subcellular location is the nucleus. The protein localises to the chromosome. Plays a structural role in chromatin. Chromatid cohesion molecule required for equal sister chromatid separation in anaphase. May form a stable link between chromatids in S phase that is split rather than removed in anaphase. Also required for spindle-kinetochore interaction in early mitosis and inhibit sister chromatid separation until the cleavage of Rad21 in anaphase. This chain is Sister chromatid cohesion protein mis4 (mis4), found in Schizosaccharomyces pombe (strain 972 / ATCC 24843) (Fission yeast).